Here is a 596-residue protein sequence, read N- to C-terminus: Aspartate--tRNA(Asp/Asn) ligase (596 aa).

Residue glutamate 175 coordinates L-aspartate. The segment at 199 to 202 (QMFK) is aspartate. L-aspartate contacts are provided by arginine 221 and histidine 451. 221-223 (RDE) lines the ATP pocket. An ATP-binding site is contributed by glutamate 485. Arginine 492 lines the L-aspartate pocket. ATP is bound at residue 537 to 540 (GVDR).

It belongs to the class-II aminoacyl-tRNA synthetase family. Type 1 subfamily. In terms of assembly, homodimer.

It localises to the cytoplasm. The enzyme catalyses tRNA(Asx) + L-aspartate + ATP = L-aspartyl-tRNA(Asx) + AMP + diphosphate. Its function is as follows. Aspartyl-tRNA synthetase with relaxed tRNA specificity since it is able to aspartylate not only its cognate tRNA(Asp) but also tRNA(Asn). Reaction proceeds in two steps: L-aspartate is first activated by ATP to form Asp-AMP and then transferred to the acceptor end of tRNA(Asp/Asn). The chain is Aspartate--tRNA(Asp/Asn) ligase from Zymomonas mobilis subsp. mobilis (strain ATCC 31821 / ZM4 / CP4).